Consider the following 635-residue polypeptide: Dual specificity protein kinase zak2 (635 aa).

2 consecutive Protein kinase domains span residues 9 to 249 and 299 to 585; these read WEEI…HRLI and NKDD…QIYF. Residues 15–23 and lysine 45 contribute to the ATP site; that span reads IGSCNSKSR. Aspartate 124 (proton acceptor) is an active-site residue. Residues 305 to 313 and lysine 326 each bind ATP; that span reads GGDGFFSVV. Aspartate 427 (proton acceptor) is an active-site residue.

The protein in the N-terminal section; belongs to the protein kinase superfamily. Ser/Thr protein kinase family. In the C-terminal section; belongs to the protein kinase superfamily. TKL Tyr protein kinase family. Post-translationally, C-terminal tyrosine kinase domain is capable of autophosphorylation, in vitro. ZakA and zak2 are coexpressed in prestalk cell population, zakA is enriched in pstB populations and zak1 in pstA populations. ZakA and zak2 are coexpressed in prespore cells, zakA expression levels are 10 fold higher than zak2.

It catalyses the reaction L-seryl-[protein] + ATP = O-phospho-L-seryl-[protein] + ADP + H(+). The enzyme catalyses L-threonyl-[protein] + ATP = O-phospho-L-threonyl-[protein] + ADP + H(+). The catalysed reaction is L-tyrosyl-[protein] + ATP = O-phospho-L-tyrosyl-[protein] + ADP + H(+). In terms of biological role, positive regulator of gsk3/gskA activity required for cell pattern formation and a downstream effector of carC. The kinases, gsk3/gskA, zakA and zak2, form part of a signaling pathway that responds to extracellular cyclic AMP. The pathway has a role in transcriptional regulation; required to direct prespore/spore fates during development. Zak2 negatively regulates prestalk differentiation by regulating expression of ecmA. Phosphorylates Y-214 of gsk3/gskA, in vitro. This is Dual specificity protein kinase zak2 (zak2) from Dictyostelium discoideum (Social amoeba).